Consider the following 107-residue polypeptide: Inner membrane protein YgbE (107 aa).

Residues 1-20 lie on the Cytoplasmic side of the membrane; sequence MRNSHNITLTNNDSLTEDEE. The helical transmembrane segment at 21-43 threads the bilayer; that stretch reads TTWSLPGAVVGFISWLFALAMPM. Residues 44 to 52 are Periplasmic-facing; that stretch reads LIYGSNTLF. The chain crosses the membrane as a helical span at residues 53–75; sequence FFIYTWPFFLALMPVAVVVGIAL. At 76–86 the chain is on the cytoplasmic side; the sequence is HSLMDGKLRYS. A helical membrane pass occupies residues 87-106; sequence IVFTLVTVGIMFGALFMWLL. A topological domain (periplasmic) is located at residue Gly107.

It is found in the cell inner membrane. The polypeptide is Inner membrane protein YgbE (ygbE) (Escherichia coli (strain K12)).